Reading from the N-terminus, the 159-residue chain is 6,7-dimethyl-8-ribityllumazine synthase (159 aa).

Residues Trp-26, 57–59 (ALE), and 79–81 (CVV) each bind 5-amino-6-(D-ribitylamino)uracil. A (2S)-2-hydroxy-3-oxobutyl phosphate-binding site is contributed by 84–85 (GT). His-87 serves as the catalytic Proton donor. Asn-112 is a binding site for 5-amino-6-(D-ribitylamino)uracil. Position 126 (Arg-126) interacts with (2S)-2-hydroxy-3-oxobutyl phosphate.

Belongs to the DMRL synthase family.

The catalysed reaction is (2S)-2-hydroxy-3-oxobutyl phosphate + 5-amino-6-(D-ribitylamino)uracil = 6,7-dimethyl-8-(1-D-ribityl)lumazine + phosphate + 2 H2O + H(+). It participates in cofactor biosynthesis; riboflavin biosynthesis; riboflavin from 2-hydroxy-3-oxobutyl phosphate and 5-amino-6-(D-ribitylamino)uracil: step 1/2. In terms of biological role, catalyzes the formation of 6,7-dimethyl-8-ribityllumazine by condensation of 5-amino-6-(D-ribitylamino)uracil with 3,4-dihydroxy-2-butanone 4-phosphate. This is the penultimate step in the biosynthesis of riboflavin. The sequence is that of 6,7-dimethyl-8-ribityllumazine synthase from Corynebacterium glutamicum (strain ATCC 13032 / DSM 20300 / JCM 1318 / BCRC 11384 / CCUG 27702 / LMG 3730 / NBRC 12168 / NCIMB 10025 / NRRL B-2784 / 534).